The following is a 184-amino-acid chain: Acireductone dioxygenase 4 (184 aa).

Positions 86, 88, 92, and 131 each coordinate Fe(2+). 4 residues coordinate Ni(2+): H86, H88, E92, and H131.

This sequence belongs to the acireductone dioxygenase (ARD) family. It depends on Fe(2+) as a cofactor. Requires Ni(2+) as cofactor.

The protein resides in the cytoplasm. It localises to the nucleus. It carries out the reaction 1,2-dihydroxy-5-(methylsulfanyl)pent-1-en-3-one + O2 = 4-methylsulfanyl-2-oxobutanoate + formate + 2 H(+). The catalysed reaction is 1,2-dihydroxy-5-(methylsulfanyl)pent-1-en-3-one + O2 = 3-(methylsulfanyl)propanoate + CO + formate + 2 H(+). The protein operates within amino-acid biosynthesis; L-methionine biosynthesis via salvage pathway; L-methionine from S-methyl-5-thio-alpha-D-ribose 1-phosphate: step 5/6. Functionally, catalyzes 2 different reactions between oxygen and the acireductone 1,2-dihydroxy-3-keto-5-methylthiopentene (DHK-MTPene) depending upon the metal bound in the active site. Fe-containing acireductone dioxygenase (Fe-ARD) produces formate and 2-keto-4-methylthiobutyrate (KMTB), the alpha-ketoacid precursor of methionine in the methionine recycle pathway. Ni-containing acireductone dioxygenase (Ni-ARD) produces methylthiopropionate, carbon monoxide and formate, and does not lie on the methionine recycle pathway. In Oryza sativa subsp. japonica (Rice), this protein is Acireductone dioxygenase 4 (ARD4).